Reading from the N-terminus, the 432-residue chain is Glutamyl-tRNA reductase (432 aa).

Substrate-binding positions include 55-58, Ser114, 119-121, and Gln125; these read TCNR and ETQ. Cys56 (nucleophile) is an active-site residue. Residue 194–199 participates in NADP(+) binding; that stretch reads GAGEMI.

It belongs to the glutamyl-tRNA reductase family. Homodimer.

It catalyses the reaction (S)-4-amino-5-oxopentanoate + tRNA(Glu) + NADP(+) = L-glutamyl-tRNA(Glu) + NADPH + H(+). Its pathway is porphyrin-containing compound metabolism; protoporphyrin-IX biosynthesis; 5-aminolevulinate from L-glutamyl-tRNA(Glu): step 1/2. Its function is as follows. Catalyzes the NADPH-dependent reduction of glutamyl-tRNA(Glu) to glutamate 1-semialdehyde (GSA). The polypeptide is Glutamyl-tRNA reductase (Burkholderia lata (strain ATCC 17760 / DSM 23089 / LMG 22485 / NCIMB 9086 / R18194 / 383)).